Reading from the N-terminus, the 571-residue chain is Coiled-coil domain-containing protein 22 homolog (571 aa).

Coiled coils occupy residues 406 to 434 and 509 to 571; these read MMDL…SRTA and CAEL…AHLR.

It belongs to the CCDC22 family.

This Culex quinquefasciatus (Southern house mosquito) protein is Coiled-coil domain-containing protein 22 homolog.